The sequence spans 68 residues: MMFRLTSVGCFLLVIACLNLFQVVLTRRCFPLGTFCSRYLPCCSGMCCSGWCTRRCAPRFGKRATFQE.

The first 26 residues, 1–26, serve as a signal peptide directing secretion; sequence MMFRLTSVGCFLLVIACLNLFQVVLT. 4 disulfides stabilise this stretch: Cys-29–Cys-43, Cys-36–Cys-48, Cys-42–Cys-52, and Cys-47–Cys-56. At Phe-60 the chain carries Phenylalanine amide. The propeptide occupies 64–68; the sequence is ATFQE.

The protein belongs to the conotoxin I2 superfamily. As to expression, expressed by the venom duct.

The protein localises to the secreted. In Conus emaciatus (False virgin cone), this protein is Conotoxin Em11.5.